The sequence spans 458 residues: Elongation factor 1-alpha (458 aa).

The residue at position 2 (Gly-2) is a N,N,N-trimethylglycine. Residue Lys-3 is modified to N6,N6-dimethyllysine; alternate. The residue at position 3 (Lys-3) is an N6-methyllysine; alternate. The tr-type G domain maps to 5–240; sequence KTHVNVVVIG…DAIEPPVRPS (236 aa). Residues 14–21 form a G1 region; it reads GHVDSGKS. 14-21 contributes to the GTP binding site; sequence GHVDSGKS. N6-methyllysine is present on Lys-30. The segment at 70 to 74 is G2; that stretch reads GITID. Residue Lys-79 is modified to N6,N6,N6-trimethyllysine. The interval 91-94 is G3; the sequence is DAPG. Residues 91-95 and 153-156 contribute to the GTP site; these read DAPGH and NKMD. The segment at 153 to 156 is G4; that stretch reads NKMD. Positions 192–194 are G5; sequence SGW. Lys-316 is subject to N6,N6-dimethyllysine; alternate. Residue Lys-316 is modified to N6-methyllysine; alternate. Lys-390 bears the N6-methyllysine mark.

This sequence belongs to the TRAFAC class translation factor GTPase superfamily. Classic translation factor GTPase family. EF-Tu/EF-1A subfamily.

The protein resides in the cytoplasm. This protein promotes the GTP-dependent binding of aminoacyl-tRNA to the A-site of ribosomes during protein biosynthesis. This Mucor circinelloides f. lusitanicus (Mucor racemosus var. lusitanicus) protein is Elongation factor 1-alpha (TEF-1).